Consider the following 631-residue polypeptide: Probable potassium transport system protein Kup 1 (631 aa).

Transmembrane regions (helical) follow at residues 16 to 36 (LGLS…SPLY), 58 to 78 (VLSL…LVFV), 109 to 129 (VLVF…TLTP), 145 to 165 (PLFH…LFLI), 173 to 193 (VGAL…LLGI), 219 to 239 (GWSG…GEAL), 255 to 275 (WFCC…ALLL), 288 to 308 (LAPP…TIIA), 345 to 365 (IYIP…VAGF), 370 to 390 (GLAA…ALLV), 402 to 422 (PLAV…FFGA), and 427 to 447 (VGAG…VMIT).

Belongs to the HAK/KUP transporter (TC 2.A.72) family.

The protein resides in the cell inner membrane. The enzyme catalyses K(+)(in) + H(+)(in) = K(+)(out) + H(+)(out). Its function is as follows. Transport of potassium into the cell. Likely operates as a K(+):H(+) symporter. This chain is Probable potassium transport system protein Kup 1, found in Geobacter sulfurreducens (strain ATCC 51573 / DSM 12127 / PCA).